A 113-amino-acid chain; its full sequence is Hydrogenase maturation factor HybF (113 aa).

Ni(2+) contacts are provided by H2 and E3. Residues C73, C76, C89, and C92 each contribute to the Zn(2+) site.

It belongs to the HypA/HybF family. HybF subfamily.

Functionally, involved in the maturation of [NiFe] hydrogenases. Required for nickel insertion into the metal center of the hydrogenase. This Klebsiella pneumoniae protein is Hydrogenase maturation factor HybF.